A 240-amino-acid chain; its full sequence is Ubiquinone biosynthesis O-methyltransferase (240 aa).

Residues Arg-44, Gly-64, Asp-85, and Met-129 each coordinate S-adenosyl-L-methionine.

This sequence belongs to the methyltransferase superfamily. UbiG/COQ3 family.

It carries out the reaction a 3-demethylubiquinol + S-adenosyl-L-methionine = a ubiquinol + S-adenosyl-L-homocysteine + H(+). The enzyme catalyses a 3-(all-trans-polyprenyl)benzene-1,2-diol + S-adenosyl-L-methionine = a 2-methoxy-6-(all-trans-polyprenyl)phenol + S-adenosyl-L-homocysteine + H(+). It functions in the pathway cofactor biosynthesis; ubiquinone biosynthesis. Its function is as follows. O-methyltransferase that catalyzes the 2 O-methylation steps in the ubiquinone biosynthetic pathway. This is Ubiquinone biosynthesis O-methyltransferase from Escherichia coli O6:H1 (strain CFT073 / ATCC 700928 / UPEC).